Consider the following 431-residue polypeptide: Enolase (431 aa).

Gln-167 provides a ligand contact to (2R)-2-phosphoglycerate. Glu-209 functions as the Proton donor in the catalytic mechanism. 3 residues coordinate Mg(2+): Asp-246, Glu-289, and Asp-316. Lys-341, Arg-370, Ser-371, and Lys-392 together coordinate (2R)-2-phosphoglycerate. The active-site Proton acceptor is Lys-341.

Belongs to the enolase family. In terms of assembly, component of the RNA degradosome, a multiprotein complex involved in RNA processing and mRNA degradation. Mg(2+) is required as a cofactor.

Its subcellular location is the cytoplasm. It localises to the secreted. The protein localises to the cell surface. It carries out the reaction (2R)-2-phosphoglycerate = phosphoenolpyruvate + H2O. It functions in the pathway carbohydrate degradation; glycolysis; pyruvate from D-glyceraldehyde 3-phosphate: step 4/5. Its function is as follows. Catalyzes the reversible conversion of 2-phosphoglycerate (2-PG) into phosphoenolpyruvate (PEP). It is essential for the degradation of carbohydrates via glycolysis. The sequence is that of Enolase from Shewanella halifaxensis (strain HAW-EB4).